A 351-amino-acid chain; its full sequence is Peptide chain release factor 1 (351 aa).

Gln-229 carries the post-translational modification N5-methylglutamine.

Belongs to the prokaryotic/mitochondrial release factor family. In terms of processing, methylated by PrmC. Methylation increases the termination efficiency of RF1.

Its subcellular location is the cytoplasm. Its function is as follows. Peptide chain release factor 1 directs the termination of translation in response to the peptide chain termination codons UAG and UAA. In Cereibacter sphaeroides (strain ATCC 17025 / ATH 2.4.3) (Rhodobacter sphaeroides), this protein is Peptide chain release factor 1.